A 927-amino-acid polypeptide reads, in one-letter code: DNA polymerase alpha-binding protein (927 aa).

4 WD repeats span residues 10–49 (FDFG…EEPE), 134–173 (KIDE…PNKV), 227–266 (AANR…LQKT), and 273–313 (STKA…IHYT). A phosphoserine mark is found at Ser377, Ser379, and Ser398. A phosphothreonine mark is found at Thr401 and Thr411. A Phosphoserine modification is found at Ser463. The stretch at 699–739 (GSDNTLLLLSKWRSPEESKWLPILDSNMEIWKMSGGKETTD) is one WD 5 repeat.

The protein resides in the nucleus. Accessory factor for DNA replication. It plays a role in accurately duplicating the genome in vivo. The protein is DNA polymerase alpha-binding protein (CTF4) of Saccharomyces cerevisiae (strain ATCC 204508 / S288c) (Baker's yeast).